The chain runs to 200 residues: ATP-dependent Clp protease proteolytic subunit 2 (200 aa).

Serine 101 acts as the Nucleophile in catalysis. Histidine 126 is a catalytic residue.

It belongs to the peptidase S14 family. In terms of assembly, fourteen ClpP subunits assemble into 2 heptameric rings which stack back to back to give a disk-like structure with a central cavity, resembling the structure of eukaryotic proteasomes.

The protein resides in the cytoplasm. The enzyme catalyses Hydrolysis of proteins to small peptides in the presence of ATP and magnesium. alpha-casein is the usual test substrate. In the absence of ATP, only oligopeptides shorter than five residues are hydrolyzed (such as succinyl-Leu-Tyr-|-NHMec, and Leu-Tyr-Leu-|-Tyr-Trp, in which cleavage of the -Tyr-|-Leu- and -Tyr-|-Trp bonds also occurs).. In terms of biological role, cleaves peptides in various proteins in a process that requires ATP hydrolysis. Has a chymotrypsin-like activity. Plays a major role in the degradation of misfolded proteins. This chain is ATP-dependent Clp protease proteolytic subunit 2, found in Prochlorococcus marinus (strain NATL2A).